We begin with the raw amino-acid sequence, 156 residues long: Ribosome maturation factor RimP (156 aa).

This sequence belongs to the RimP family.

It is found in the cytoplasm. Required for maturation of 30S ribosomal subunits. The polypeptide is Ribosome maturation factor RimP (Synechococcus sp. (strain JA-2-3B'a(2-13)) (Cyanobacteria bacterium Yellowstone B-Prime)).